The sequence spans 138 residues: Large ribosomal subunit protein bL19 (138 aa).

This sequence belongs to the bacterial ribosomal protein bL19 family.

Functionally, this protein is located at the 30S-50S ribosomal subunit interface and may play a role in the structure and function of the aminoacyl-tRNA binding site. The protein is Large ribosomal subunit protein bL19 of Rickettsia akari (strain Hartford).